A 362-amino-acid polypeptide reads, in one-letter code: Probable tocopherol O-methyltransferase, chloroplastic (362 aa).

Residues 1 to 55 constitute a chloroplast transit peptide; the sequence is MAHAAAATGALAPLHPLLRCTSRHLCASASPRAGLCLHHHRRRRRSSRRTKLAVR. The segment at 141–150 is SAM motif I; sequence VVDVGCGIGG. The SAM motif II stretch occupies residues 204–212; that stretch reads GQFDLVWSM. Residues 231–240 form an SAM motif III region; it reads VAAPGARIII.

The protein belongs to the class I-like SAM-binding methyltransferase superfamily. gTMT family.

It localises to the plastid. The protein resides in the chloroplast. It catalyses the reaction gamma-tocopherol + S-adenosyl-L-methionine = (+)-alpha-tocopherol + S-adenosyl-L-homocysteine + H(+). The enzyme catalyses delta-tocotrienol + S-adenosyl-L-methionine = beta-tocotrienol + S-adenosyl-L-homocysteine + H(+). It carries out the reaction gamma-tocotrienol + S-adenosyl-L-methionine = alpha-tocotrienol + S-adenosyl-L-homocysteine + H(+). The catalysed reaction is delta-tocopherol + S-adenosyl-L-methionine = beta-tocopherol + S-adenosyl-L-homocysteine + H(+). It participates in cofactor biosynthesis; tocopherol biosynthesis. Its function is as follows. Involved in the synthesis of tocopherol (vitamin E). Methylates gamma- and delta-tocopherol to form beta- and alpha-tocopherol, respectively. The sequence is that of Probable tocopherol O-methyltransferase, chloroplastic (VTE4) from Oryza sativa subsp. japonica (Rice).